The sequence spans 103 residues: Large ribosomal subunit protein bL21 (103 aa).

The protein belongs to the bacterial ribosomal protein bL21 family. Part of the 50S ribosomal subunit. Contacts protein L20.

Its function is as follows. This protein binds to 23S rRNA in the presence of protein L20. This Pseudomonas syringae pv. syringae (strain B728a) protein is Large ribosomal subunit protein bL21.